Consider the following 226-residue polypeptide: MNSRDSAASEITPEVLLRAYACGIFPMAESADDPSLFWVEPELRGVIPLDGFRVASRLARTVRSDAFTLTVNQAFKAVMDGCAAPQPGREDTWINRRIRELYGGLHAMGHCHSVECWQDGELVGGLYGVSLGRAFFGESMFHRARDASKVALVHLVARLIAGGFELLDTQYVTEHLKTFGAVEIPRRRYTVLLEKALTGPAANFARLPTDRPLAGAEALAIIAERG.

This sequence belongs to the L/F-transferase family.

It is found in the cytoplasm. The enzyme catalyses N-terminal L-lysyl-[protein] + L-leucyl-tRNA(Leu) = N-terminal L-leucyl-L-lysyl-[protein] + tRNA(Leu) + H(+). It carries out the reaction N-terminal L-arginyl-[protein] + L-leucyl-tRNA(Leu) = N-terminal L-leucyl-L-arginyl-[protein] + tRNA(Leu) + H(+). The catalysed reaction is L-phenylalanyl-tRNA(Phe) + an N-terminal L-alpha-aminoacyl-[protein] = an N-terminal L-phenylalanyl-L-alpha-aminoacyl-[protein] + tRNA(Phe). In terms of biological role, functions in the N-end rule pathway of protein degradation where it conjugates Leu, Phe and, less efficiently, Met from aminoacyl-tRNAs to the N-termini of proteins containing an N-terminal arginine or lysine. In Bradyrhizobium sp. (strain ORS 278), this protein is Leucyl/phenylalanyl-tRNA--protein transferase.